Consider the following 774-residue polypeptide: Mastermind-like domain-containing protein 1 (774 aa).

Disordered stretches follow at residues 257–279, 310–365, 386–421, 442–473, 525–609, 656–678, and 755–774; these read STGI…SSMA, LAAS…PQSL, ALLS…QPQF, HLMS…QQSF, GMAS…QPDH, PQHQ…VSPS, and LPSC…GNDP. Residues 331 to 361 are compositionally biased toward pro residues; that stretch reads LPPPGLSPPYRPVPSPHPPPLPLPPPPPPFS. Residues 386–397 show a composition bias toward polar residues; the sequence is ALLSSMTSSSNA. Over residues 574 to 609 the composition is skewed to low complexity; that stretch reads QQPTPTQASSATASSTATATLQLQQQQQQQQQQPDH. Positions 656–669 are enriched in polar residues; that stretch reads PQHQHGNSFTSRQD. Residue serine 676 is modified to Phosphoserine.

The protein belongs to the mastermind family. In terms of tissue distribution, expressed in fetal brain, fetal ovary and fetal testis. Expressed in adult brain, ovary, skin, testis, uterus. Highly expressed in skeletal muscle.

It localises to the nucleus. In terms of biological role, transactivates the HES3 promoter independently of NOTCH proteins. HES3 is a non-canonical NOTCH target gene which lacks binding sites for RBPJ. The chain is Mastermind-like domain-containing protein 1 (MAMLD1) from Homo sapiens (Human).